We begin with the raw amino-acid sequence, 581 residues long: ATP-dependent lipid A-core flippase (581 aa).

The next 5 membrane-spanning stretches (helical) occupy residues 15–35 (LWPI…ALIL), 68–88 (LIVI…SYCI), 152–172 (IIGL…ILIV), 252–272 (PIIQ…ASFP), and 274–294 (IMET…IALM). The ABC transmembrane type-1 domain occupies 27–309 (IVAAVALILN…LTNVNAQFQR (283 aa)). The ABC transporter domain occupies 341 to 577 (IEFRNVTFCY…NGVYSQLHRM (237 aa)). Residue 375–382 (GRSGSGKS) participates in ATP binding.

This sequence belongs to the ABC transporter superfamily. Lipid exporter (TC 3.A.1.106) family. As to quaternary structure, homodimer.

The protein localises to the cell inner membrane. It catalyses the reaction ATP + H2O + lipid A-core oligosaccharideSide 1 = ADP + phosphate + lipid A-core oligosaccharideSide 2.. In terms of biological role, involved in lipopolysaccharide (LPS) biosynthesis. Translocates lipid A-core from the inner to the outer leaflet of the inner membrane. Transmembrane domains (TMD) form a pore in the inner membrane and the ATP-binding domain (NBD) is responsible for energy generation. This chain is ATP-dependent lipid A-core flippase, found in Photorhabdus laumondii subsp. laumondii (strain DSM 15139 / CIP 105565 / TT01) (Photorhabdus luminescens subsp. laumondii).